We begin with the raw amino-acid sequence, 159 residues long: Phosphopantetheine adenylyltransferase (159 aa).

Thr10 is a substrate binding site. ATP contacts are provided by residues 10–11 (TF) and His18. Substrate contacts are provided by Lys42, Met74, and Arg88. ATP-binding positions include 89–91 (GLR), Glu99, and 124–130 (WSFISSS).

It belongs to the bacterial CoaD family. Homohexamer. Mg(2+) serves as cofactor.

It is found in the cytoplasm. The catalysed reaction is (R)-4'-phosphopantetheine + ATP + H(+) = 3'-dephospho-CoA + diphosphate. The protein operates within cofactor biosynthesis; coenzyme A biosynthesis; CoA from (R)-pantothenate: step 4/5. Its function is as follows. Reversibly transfers an adenylyl group from ATP to 4'-phosphopantetheine, yielding dephospho-CoA (dPCoA) and pyrophosphate. The sequence is that of Phosphopantetheine adenylyltransferase from Escherichia coli (strain UTI89 / UPEC).